The primary structure comprises 89 residues: Peroxidase (89 aa).

Residue histidine 52 participates in heme binding. Positions 53 and 68 each coordinate Ca(2+).

Requires heme b as cofactor. Ca(2+) is required as a cofactor.

The protein localises to the secreted. The enzyme catalyses 2 a phenolic donor + H2O2 = 2 a phenolic radical donor + 2 H2O. Removal of H(2)O(2), oxidation of toxic reductants, biosynthesis and degradation of lignin, suberization, auxin catabolism, response to environmental stresses such as wounding, pathogen attack and oxidative stress. These functions might be dependent on each isozyme/isoform in each plant tissue. Active against p-coumaryl alcohol, coniferyl alcohol and coniferyl aldehyde. The chain is Peroxidase from Ginkgo biloba (Ginkgo).